The chain runs to 339 residues: Methionine import ATP-binding protein MetN 2 (339 aa).

Residues 2-241 (ISFNNVSKLY…PKTKTTQNFV (240 aa)) enclose the ABC transporter domain. 38–45 (GFSGAGKS) serves as a coordination point for ATP.

It belongs to the ABC transporter superfamily. Methionine importer (TC 3.A.1.24) family. In terms of assembly, the complex is composed of two ATP-binding proteins (MetN), two transmembrane proteins (MetI) and a solute-binding protein (MetQ).

The protein localises to the cell membrane. It carries out the reaction L-methionine(out) + ATP + H2O = L-methionine(in) + ADP + phosphate + H(+). The enzyme catalyses D-methionine(out) + ATP + H2O = D-methionine(in) + ADP + phosphate + H(+). In terms of biological role, part of the ABC transporter complex MetNIQ involved in methionine import. Responsible for energy coupling to the transport system. The chain is Methionine import ATP-binding protein MetN 2 from Bacillus cereus (strain ATCC 14579 / DSM 31 / CCUG 7414 / JCM 2152 / NBRC 15305 / NCIMB 9373 / NCTC 2599 / NRRL B-3711).